A 437-amino-acid chain; its full sequence is Serine--tRNA ligase (437 aa).

Position 227–229 (227–229 (TAE)) interacts with L-serine. ATP contacts are provided by residues 258–260 (RSE) and V274. E281 serves as a coordination point for L-serine. 347-350 (ETHS) serves as a coordination point for ATP. T382 serves as a coordination point for L-serine.

It belongs to the class-II aminoacyl-tRNA synthetase family. Type-1 seryl-tRNA synthetase subfamily. As to quaternary structure, homodimer. The tRNA molecule binds across the dimer.

Its subcellular location is the cytoplasm. The catalysed reaction is tRNA(Ser) + L-serine + ATP = L-seryl-tRNA(Ser) + AMP + diphosphate + H(+). It carries out the reaction tRNA(Sec) + L-serine + ATP = L-seryl-tRNA(Sec) + AMP + diphosphate + H(+). The protein operates within aminoacyl-tRNA biosynthesis; selenocysteinyl-tRNA(Sec) biosynthesis; L-seryl-tRNA(Sec) from L-serine and tRNA(Sec): step 1/1. In terms of biological role, catalyzes the attachment of serine to tRNA(Ser). Is also able to aminoacylate tRNA(Sec) with serine, to form the misacylated tRNA L-seryl-tRNA(Sec), which will be further converted into selenocysteinyl-tRNA(Sec). The sequence is that of Serine--tRNA ligase from Deinococcus geothermalis (strain DSM 11300 / CIP 105573 / AG-3a).